Consider the following 466-residue polypeptide: MTIRLHDTNARQIRDFVPLTAGCVSIYLCGATVQAAPHIGHIRSGLNFDIMRRWFAYRGYDVTFIRNVTDIDDKIIAKSAEQGRPWWSIGYENERAFNDGYDALGCLPPTYEPRATGHIPEMIEMMRGLIERGHAYEADGNVYFDVRSLPGYLTLSNQELDDLRQPSGEGETGKRDQRDFAMWKATKPGEPSWETPWGRGRPGWHLECSAMAHKYLGSAFDIHGGGIDLIFPHHENEIAQATAYGDEFAKYWVHNGWVTMSGEKMSKSLGNSVLVSEMVKHWRPIVLRYYLGTPHYRSMIEYSEEALREAESAFARIEGFVQRVTEKTGEVVPPADEVPPAFAEAMDEDLGVPQALAIIHTTVRQGNSALAADDKEAAADRLAEVRAMLGVLGLDPLDPHWAGEGDRGEDLHGVVDTLVRLVLDQRQSARARKDWAAADAIRDQLNQSGLVIEDSPAGPRWTLGPR.

C29 contacts Zn(2+). A 'HIGH' region motif is present at residues 31–41; that stretch reads ATVQAAPHIGH. C208, H233, and E237 together coordinate Zn(2+). Positions 264 to 268 match the 'KMSKS' region motif; it reads KMSKS. Position 267 (K267) interacts with ATP.

The protein belongs to the class-I aminoacyl-tRNA synthetase family. Monomer. Requires Zn(2+) as cofactor.

The protein localises to the cytoplasm. It carries out the reaction tRNA(Cys) + L-cysteine + ATP = L-cysteinyl-tRNA(Cys) + AMP + diphosphate. The protein is Cysteine--tRNA ligase of Streptomyces griseus subsp. griseus (strain JCM 4626 / CBS 651.72 / NBRC 13350 / KCC S-0626 / ISP 5235).